Consider the following 213-residue polypeptide: Transmembrane emp24 domain-containing protein p24delta8 (213 aa).

Positions 1-22 are cleaved as a signal peptide; that stretch reads MDLCRSSILLLIIALLSPRTLS. Residues 23–180 are Lumenal-facing; the sequence is MRYELKSSKT…QELNRSTNSK (158 aa). The region spanning 32–148 is the GOLD domain; that stretch reads TKCIGEEIHE…VDMMEYQVKT (117 aa). A glycan (N-linked (GlcNAc...) asparagine) is linked at Asn-97. The stretch at 163 to 176 forms a coiled coil; that stretch reads LREREEEMQELNRS. Residue Arg-166 is modified to Omega-N-methylated arginine. N-linked (GlcNAc...) asparagine glycosylation is present at Asn-174. A helical transmembrane segment spans residues 181-203; that stretch reads MAWLSFGSLVVCLSVAGLQFWHL. Residues 202 to 213 form an interaction with ARF1 region; sequence HLKTFFEKKKLI. The Cytoplasmic segment spans residues 204-213; that stretch reads KTFFEKKKLI. A COPII vesicle coat-binding motif is present at residues 206–207; that stretch reads FF. Positions 206-213 match the COPI vesicle coat-binding motif; the sequence is FFEKKKLI.

It belongs to the EMP24/GP25L family. In terms of assembly, probably oligomerizes with other members of the EMP24/GP25L family. Associates with the COPI vesicle coat (coatomer). Associates with the COPII vesicle coat (coatomer). Interacts with ARF1 (GDP-bound).

The protein localises to the endoplasmic reticulum membrane. It localises to the golgi apparatus. Its subcellular location is the cis-Golgi network membrane. It is found in the golgi stack membrane. Functionally, involved in vesicular protein trafficking. Mainly functions in the early secretory pathway. Thought to act as cargo receptor at the lumenal side for incorporation of secretory cargo molecules into transport vesicles and to be involved in vesicle coat formation at the cytoplasmic side. On Golgi membranes, acts as a primary receptor for ARF1-GDP which is involved in COPI-vesicle formation. This chain is Transmembrane emp24 domain-containing protein p24delta8, found in Arabidopsis thaliana (Mouse-ear cress).